The chain runs to 281 residues: MEMO1 family protein PAE0818 (281 aa).

It belongs to the MEMO1 family.

In Pyrobaculum aerophilum (strain ATCC 51768 / DSM 7523 / JCM 9630 / CIP 104966 / NBRC 100827 / IM2), this protein is MEMO1 family protein PAE0818.